Reading from the N-terminus, the 92-residue chain is MARSIKKGPFIDEHLAKKVLAEGPNSKKIIKTWSRRSTITPDFIGLSFAVHNGRKFVPVYVTENMVGHKLGEFSPTRTFHGHAADRKSKAKR.

Belongs to the universal ribosomal protein uS19 family.

Protein S19 forms a complex with S13 that binds strongly to the 16S ribosomal RNA. The chain is Small ribosomal subunit protein uS19 from Pelobacter propionicus (strain DSM 2379 / NBRC 103807 / OttBd1).